The primary structure comprises 483 residues: UDP-glycosyltransferase 85C1 (483 aa).

UDP-alpha-D-glucose is bound by residues S304, 360 to 361, 378 to 386, and 400 to 403; these read WC, HCGWGSIIE, and IGDQ.

The protein belongs to the UDP-glycosyltransferase family.

Its function is as follows. May glycosylate diterpenes or flavonols in leaves. The protein is UDP-glycosyltransferase 85C1 of Stevia rebaudiana (Stevia).